The primary structure comprises 442 residues: 3-isopropylmalate dehydratase large subunit (442 aa).

Residues Xaa347, Cys407, and Cys410 each coordinate [4Fe-4S] cluster.

Belongs to the aconitase/IPM isomerase family. LeuC type 1 subfamily. Heterodimer of LeuC and LeuD. The cofactor is [4Fe-4S] cluster.

It carries out the reaction (2R,3S)-3-isopropylmalate = (2S)-2-isopropylmalate. The protein operates within amino-acid biosynthesis; L-leucine biosynthesis; L-leucine from 3-methyl-2-oxobutanoate: step 2/4. Its function is as follows. Catalyzes the isomerization between 2-isopropylmalate and 3-isopropylmalate, via the formation of 2-isopropylmaleate. This Buchnera aphidicola subsp. Macrosiphoniella ludovicianae protein is 3-isopropylmalate dehydratase large subunit.